A 169-amino-acid polypeptide reads, in one-letter code: Ferric-chelate reductase (NAD(P)H) (169 aa).

Tyr-7 provides a ligand contact to NADP(+). FMN contacts are provided by residues 27-31, 45-52, 82-84, and Lys-89; these read QIANT, CLNKENDT, and RKS. Residues His-126 and 147–154 each bind NADP(+); that span reads YADYHLMK.

This sequence belongs to the non-flavoprotein flavin reductase family. In terms of assembly, homodimer. Requires FMN as cofactor. It depends on FAD as a cofactor.

It catalyses the reaction 2 a Fe(II)-siderophore + NAD(+) + H(+) = 2 a Fe(III)-siderophore + NADH. The catalysed reaction is 2 a Fe(II)-siderophore + NADP(+) + H(+) = 2 a Fe(III)-siderophore + NADPH. Its function is as follows. Catalyzes the reduction of bound ferric iron (Fe(3+)) in a variety of iron chelators (siderophores) using NAD(P)H as the electron donor, resulting in the release of Fe(2+). Not active with uncomplexed Fe(3+). Also reduces FMN and FAD, but not riboflavin. The polypeptide is Ferric-chelate reductase (NAD(P)H) (Archaeoglobus fulgidus (strain ATCC 49558 / DSM 4304 / JCM 9628 / NBRC 100126 / VC-16)).